Consider the following 507-residue polypeptide: ATP synthase subunit alpha, chloroplastic (507 aa).

170–177 (GDRQTGKT) lines the ATP pocket.

Belongs to the ATPase alpha/beta chains family. F-type ATPases have 2 components, CF(1) - the catalytic core - and CF(0) - the membrane proton channel. CF(1) has five subunits: alpha(3), beta(3), gamma(1), delta(1), epsilon(1). CF(0) has four main subunits: a, b, b' and c.

Its subcellular location is the plastid. The protein resides in the chloroplast thylakoid membrane. The catalysed reaction is ATP + H2O + 4 H(+)(in) = ADP + phosphate + 5 H(+)(out). In terms of biological role, produces ATP from ADP in the presence of a proton gradient across the membrane. The alpha chain is a regulatory subunit. The protein is ATP synthase subunit alpha, chloroplastic of Anthoceros angustus (Hornwort).